The following is a 274-amino-acid chain: Triosephosphate isomerase (274 aa).

31–33 provides a ligand contact to substrate; it reads NWK. Catalysis depends on H118, which acts as the Electrophile. Catalysis depends on E188, which acts as the Proton acceptor. Substrate is bound by residues G194, S234, and 255 to 256; that span reads GG.

The protein belongs to the triosephosphate isomerase family. In terms of assembly, homodimer.

The protein localises to the cytoplasm. The catalysed reaction is D-glyceraldehyde 3-phosphate = dihydroxyacetone phosphate. It participates in carbohydrate biosynthesis; gluconeogenesis. It functions in the pathway carbohydrate degradation; glycolysis; D-glyceraldehyde 3-phosphate from glycerone phosphate: step 1/1. Involved in the gluconeogenesis. Catalyzes stereospecifically the conversion of dihydroxyacetone phosphate (DHAP) to D-glyceraldehyde-3-phosphate (G3P). This Chlamydia trachomatis serovar L2 (strain ATCC VR-902B / DSM 19102 / 434/Bu) protein is Triosephosphate isomerase.